Reading from the N-terminus, the 418-residue chain is Glutamyl-tRNA reductase (418 aa).

Substrate-binding positions include 49–52 (TCNR), S109, 114–116 (EPQ), and Q120. The active-site Nucleophile is C50. 189 to 194 (GAGETI) contacts NADP(+).

This sequence belongs to the glutamyl-tRNA reductase family. In terms of assembly, homodimer.

The enzyme catalyses (S)-4-amino-5-oxopentanoate + tRNA(Glu) + NADP(+) = L-glutamyl-tRNA(Glu) + NADPH + H(+). Its pathway is porphyrin-containing compound metabolism; protoporphyrin-IX biosynthesis; 5-aminolevulinate from L-glutamyl-tRNA(Glu): step 1/2. Functionally, catalyzes the NADPH-dependent reduction of glutamyl-tRNA(Glu) to glutamate 1-semialdehyde (GSA). In Escherichia coli O6:K15:H31 (strain 536 / UPEC), this protein is Glutamyl-tRNA reductase.